A 336-amino-acid polypeptide reads, in one-letter code: Isethionate-binding periplasmic protein DctP (336 aa).

Residues Met-1–Ala-23 form the signal peptide.

It belongs to the bacterial solute-binding protein 7 family. The complex comprises the periplasmic solute receptor protein DctP, and the fused transmembrane protein DctMQ.

It is found in the periplasm. The enzyme catalyses 2-hydroxyethane-1-sulfonate(out) + Na(+)(out) = 2-hydroxyethane-1-sulfonate(in) + Na(+)(in). It functions in the pathway organosulfur degradation; alkanesulfonate degradation. Its function is as follows. Part of the tripartite ATP-independent periplasmic (TRAP) transport system DctPQM involved in the uptake of isethionate (2-hydroxyethanesulfonate), which is then catabolized by enzymes encoded by adjacent genes in the locus. The DctP subunit is the solute-binding protein. Thereby is involved in an anaerobic respiration pathway that converts the sulfonate isethionate to ammonia, acetate and sulfide. The chain is Isethionate-binding periplasmic protein DctP from Oleidesulfovibrio alaskensis (strain ATCC BAA-1058 / DSM 17464 / G20) (Desulfovibrio alaskensis).